The following is an 872-amino-acid chain: DNA mismatch repair protein MutS (872 aa).

The span at 1-17 (MSISKIESVNAEKQSPV) shows a compositional bias: polar residues. Residues 1–22 (MSISKIESVNAEKQSPVGTEIG) are disordered. 632-639 (GPNMGGKS) is an ATP binding site.

Belongs to the DNA mismatch repair MutS family.

Its function is as follows. This protein is involved in the repair of mismatches in DNA. It is possible that it carries out the mismatch recognition step. This protein has a weak ATPase activity. The protein is DNA mismatch repair protein MutS of Azoarcus sp. (strain BH72).